A 159-amino-acid chain; its full sequence is Succinate dehydrogenase [ubiquinone] cytochrome b small subunit, mitochondrial (159 aa).

A mitochondrion-targeting transit peptide spans 1-56 (MAVLWRLSAVCGAQGGRALLLRTPVVRPAHISAFLQDRPIPEWCGVQHIHLSPGHH). Over 57–63 (SGSKAAS) the chain is Mitochondrial matrix. Residues 64–85 (LHWTSERVVSVLLLGLLPAAYL) form a helical membrane-spanning segment. At 86–90 (NPCSA) the chain is on the mitochondrial intermembrane side. Residues 91-111 (MDYSLAATLTLHGHWGLGQVV) form a helical membrane-spanning segment. Position 102 (His102) interacts with heme b. The Mitochondrial matrix portion of the chain corresponds to 112 to 120 (TDYVHGDAS). Tyr114 serves as a coordination point for a ubiquinone. Residues 121 to 142 (QKAAKAGLLALSALTFAGLCYF) form a helical membrane-spanning segment. The Mitochondrial intermembrane segment spans residues 143 to 159 (NYHDVGICKAVAMLWKL).

The protein belongs to the CybS family. Component of complex II composed of four subunits: the flavoprotein (FP) SDHA, iron-sulfur protein (IP) SDHB, and a cytochrome b560 composed of SDHC and SDHD.

The protein localises to the mitochondrion inner membrane. The protein operates within carbohydrate metabolism; tricarboxylic acid cycle. Membrane-anchoring subunit of succinate dehydrogenase (SDH) that is involved in complex II of the mitochondrial electron transport chain and is responsible for transferring electrons from succinate to ubiquinone (coenzyme Q). SDH also oxidizes malate to the non-canonical enol form of oxaloacetate, enol-oxaloacetate. Enol-oxaloacetate, which is a potent inhibitor of the succinate dehydrogenase activity, is further isomerized into keto-oxaloacetate. This chain is Succinate dehydrogenase [ubiquinone] cytochrome b small subunit, mitochondrial (SDHD), found in Pongo abelii (Sumatran orangutan).